The following is a 1478-amino-acid chain: Zinc finger protein 518A (1478 aa).

4 C2H2-type zinc fingers span residues 152–174, 209–231, 236–258, and 264–287; these read FPCEMCSFSASDFQIFKQHRKTH, FQCEECRFFTQDVGTFVQHIHRH, YKCGKCHHLCFTKGELQKHLRVH, and FTCHYCSYGAIHKDQLVRHVITLH. The disordered stretch occupies residues 355–394; that stretch reads TQTKSEDQSQEQLNEEKGGRQHCEDGDKPIESGSEKATVL. K358 is covalently cross-linked (Glycyl lysine isopeptide (Lys-Gly) (interchain with G-Cter in SUMO2)). A compositionally biased stretch (basic and acidic residues) spans 368–388; that stretch reads NEEKGGRQHCEDGDKPIESGS. Glycyl lysine isopeptide (Lys-Gly) (interchain with G-Cter in SUMO2) cross-links involve residues K390 and K428. The interval 464–484 is disordered; the sequence is PSPALQPNTEKESTANLPPQA. K518 is covalently cross-linked (Glycyl lysine isopeptide (Lys-Gly) (interchain with G-Cter in SUMO2)). Residue S652 is modified to Phosphoserine. The interval 656 to 694 is disordered; the sequence is VCENLQRESSNKTVTQQSTSDSDTTSPLRKESSNSDSLL. Positions 670 to 681 are enriched in low complexity; the sequence is TQQSTSDSDTTS. Residues K707, K792, K882, K895, K987, K1008, K1041, K1055, K1078, K1180, and K1441 each participate in a glycyl lysine isopeptide (Lys-Gly) (interchain with G-Cter in SUMO2) cross-link. The C2H2-type 5 zinc finger occupies 1444–1466; it reads FNCWFCGRVFDNQDVWAGHGQRH.

It belongs to the krueppel C2H2-type zinc-finger protein family.

The protein localises to the nucleus. Its function is as follows. Through its association with the EHMT1-EHMT2/G9A and PRC2/EED-EZH2 histone methyltransferase complexes may function in gene silencing, regulating repressive post-translational methylation of histone tails at promoters of target genes. The polypeptide is Zinc finger protein 518A (Znf518a) (Rattus norvegicus (Rat)).